The primary structure comprises 205 residues: Adenylyl-sulfate kinase (205 aa).

Gly31–Ser38 serves as a coordination point for ATP. The active-site Phosphoserine intermediate is the Ser105.

The protein belongs to the APS kinase family.

The catalysed reaction is adenosine 5'-phosphosulfate + ATP = 3'-phosphoadenylyl sulfate + ADP + H(+). It participates in sulfur metabolism; hydrogen sulfide biosynthesis; sulfite from sulfate: step 2/3. Catalyzes the synthesis of activated sulfate. The chain is Adenylyl-sulfate kinase from Shewanella putrefaciens (strain CN-32 / ATCC BAA-453).